The following is a 728-amino-acid chain: 1,4-alpha-glucan branching enzyme GlgB (728 aa).

Aspartate 405 (nucleophile) is an active-site residue. The active-site Proton donor is the glutamate 458.

It belongs to the glycosyl hydrolase 13 family. GlgB subfamily. Monomer.

It carries out the reaction Transfers a segment of a (1-&gt;4)-alpha-D-glucan chain to a primary hydroxy group in a similar glucan chain.. The protein operates within glycan biosynthesis; glycogen biosynthesis. In terms of biological role, catalyzes the formation of the alpha-1,6-glucosidic linkages in glycogen by scission of a 1,4-alpha-linked oligosaccharide from growing alpha-1,4-glucan chains and the subsequent attachment of the oligosaccharide to the alpha-1,6 position. The sequence is that of 1,4-alpha-glucan branching enzyme GlgB from Escherichia coli O157:H7.